Consider the following 331-residue polypeptide: Methionyl-tRNA formyltransferase (331 aa).

Ser-111–Pro-114 lines the (6S)-5,6,7,8-tetrahydrofolate pocket.

Belongs to the Fmt family.

The enzyme catalyses L-methionyl-tRNA(fMet) + (6R)-10-formyltetrahydrofolate = N-formyl-L-methionyl-tRNA(fMet) + (6S)-5,6,7,8-tetrahydrofolate + H(+). Functionally, attaches a formyl group to the free amino group of methionyl-tRNA(fMet). The formyl group appears to play a dual role in the initiator identity of N-formylmethionyl-tRNA by promoting its recognition by IF2 and preventing the misappropriation of this tRNA by the elongation apparatus. The polypeptide is Methionyl-tRNA formyltransferase (Thermosynechococcus vestitus (strain NIES-2133 / IAM M-273 / BP-1)).